The primary structure comprises 411 residues: Replication factor C subunit 2 (411 aa).

The disordered stretch occupies residues 1–36 (MADFFNLKARQQAAAQASSSKTPTSKQESNRLQPWV). The span at 11–27 (QQAAAQASSSKTPTSKQ) shows a compositional bias: low complexity. ATP contacts are provided by residues valine 36, arginine 40, 73–81 (GPPGTGKTS), asparagine 195, and arginine 253.

This sequence belongs to the activator 1 small subunits family. Heteropentamer of subunits RFC1, RFC2, RFC3, RFC4 and RFC5 that forms a complex with PCNA in the presence of ATP.

The protein resides in the nucleus. The elongation of primed DNA templates by DNA polymerase delta and epsilon requires the action of the accessory proteins proliferating cell nuclear antigen (PCNA) and activator 1. Subunit 2 binds ATP and single-stranded DNA. The sequence is that of Replication factor C subunit 2 (RFC2) from Phaeosphaeria nodorum (strain SN15 / ATCC MYA-4574 / FGSC 10173) (Glume blotch fungus).